A 178-amino-acid chain; its full sequence is Large ribosomal subunit protein bL35m (178 aa).

Belongs to the bacterial ribosomal protein bL35 family.

The protein localises to the mitochondrion. This Drosophila melanogaster (Fruit fly) protein is Large ribosomal subunit protein bL35m (mRpL35).